Reading from the N-terminus, the 302-residue chain is Quinolinate synthase (302 aa).

Residues His24 and Ser41 each contribute to the iminosuccinate site. Position 86 (Cys86) interacts with [4Fe-4S] cluster. Residues 112–114 (YVN) and Ser129 contribute to the iminosuccinate site. Cys171 serves as a coordination point for [4Fe-4S] cluster. Iminosuccinate-binding positions include 197–199 (HPE) and Thr214. Position 259 (Cys259) interacts with [4Fe-4S] cluster.

The protein belongs to the quinolinate synthase family. Type 2 subfamily. Requires [4Fe-4S] cluster as cofactor.

The protein localises to the cytoplasm. It catalyses the reaction iminosuccinate + dihydroxyacetone phosphate = quinolinate + phosphate + 2 H2O + H(+). It participates in cofactor biosynthesis; NAD(+) biosynthesis; quinolinate from iminoaspartate: step 1/1. Its function is as follows. Catalyzes the condensation of iminoaspartate with dihydroxyacetone phosphate to form quinolinate. The sequence is that of Quinolinate synthase from Dehalococcoides mccartyi (strain CBDB1).